We begin with the raw amino-acid sequence, 608 residues long: Glutamine--fructose-6-phosphate aminotransferase [isomerizing] (608 aa).

Residue Cys2 is the Nucleophile; for GATase activity of the active site. Residues 2-217 (CGIVGIVGTQ…DGDCAIVTRD (216 aa)) enclose the Glutamine amidotransferase type-2 domain. SIS domains follow at residues 281–422 (ADKA…ARGT) and 456–598 (LSRD…VDQP). The For Fru-6P isomerization activity role is filled by Lys603.

As to quaternary structure, homodimer.

The protein localises to the cytoplasm. The enzyme catalyses D-fructose 6-phosphate + L-glutamine = D-glucosamine 6-phosphate + L-glutamate. Its function is as follows. Catalyzes the first step in hexosamine metabolism, converting fructose-6P into glucosamine-6P using glutamine as a nitrogen source. The sequence is that of Glutamine--fructose-6-phosphate aminotransferase [isomerizing] from Agrobacterium fabrum (strain C58 / ATCC 33970) (Agrobacterium tumefaciens (strain C58)).